A 140-amino-acid chain; its full sequence is Cytochrome c-type biogenesis protein CcmE (140 aa).

Topologically, residues 1-7 (MKRKHKR) are cytoplasmic. A helical; Signal-anchor for type II membrane protein transmembrane segment spans residues 8 to 28 (LLFVLASFCAAGCALLFILSE). Over 29 to 140 (LRESVSFFYT…TIPKALPEPK (112 aa)) the chain is Periplasmic. H121 and Y125 together coordinate heme.

This sequence belongs to the CcmE/CycJ family.

The protein localises to the cell inner membrane. In terms of biological role, heme chaperone required for the biogenesis of c-type cytochromes. Transiently binds heme delivered by CcmC and transfers the heme to apo-cytochromes in a process facilitated by CcmF and CcmH. The polypeptide is Cytochrome c-type biogenesis protein CcmE (Anaplasma marginale (strain Florida)).